Consider the following 294-residue polypeptide: Type 4 apparatus protein DotZ (294 aa).

The T4BSS is a complex nanomachine composed of several subcomplexes. This subunit is part of the Type IV Coupling Complex (T4CC), a subcomplex composed of the DotLMNYZ core and the IcmSW-LvgA adapter subunits, linked by the C-terminal tail of DotL. Six DotLMNYZ hetero-pentameric units may assemble into a hexameric nanomachine, forming an inner membrane channel for effectors to pass through. Makes significant contact with DotN and DotY, but engages weakly with DotM and DotL. DotY and DotZ are co-dependent for the assembly into the T4CC.

It localises to the cytoplasm. Component of the Dot/Icm type IVB secretion system (T4BSS), which is used to inject bacterial effector proteins into eukaryotic host cells. Part of a subcomplex which recruits effector proteins and delivers them to the core transmembrane subcomplex. DotY and DotZ play a role in effector translocation, but are not essential and do not influence the stability of the subcomplex main components. The DotY/DotZ main function is to optimize secretion by modulating the delivery trajectory of the IcmSW module and the localization of the machinery to the poles. The protein is Type 4 apparatus protein DotZ of Legionella pneumophila subsp. pneumophila (strain Philadelphia 1 / ATCC 33152 / DSM 7513).